The sequence spans 606 residues: Methionine--tRNA ligase (606 aa).

The short motif at 14–24 is the 'HIGH' region element; sequence PYANGPRHIGH. Zn(2+) is bound by residues Cys146, Cys149, Cys159, and Cys162. A 'KMSKS' region motif is present at residues 351 to 355; the sequence is KFSSS. Ser354 is an ATP binding site.

Belongs to the class-I aminoacyl-tRNA synthetase family. MetG type 1 subfamily. As to quaternary structure, monomer. The cofactor is Zn(2+).

The protein resides in the cytoplasm. The catalysed reaction is tRNA(Met) + L-methionine + ATP = L-methionyl-tRNA(Met) + AMP + diphosphate. Functionally, is required not only for elongation of protein synthesis but also for the initiation of all mRNA translation through initiator tRNA(fMet) aminoacylation. The protein is Methionine--tRNA ligase of Thermobifida fusca (strain YX).